Reading from the N-terminus, the 101-residue chain is Small ribosomal subunit protein uS14 (101 aa).

This sequence belongs to the universal ribosomal protein uS14 family. As to quaternary structure, part of the 30S ribosomal subunit. Contacts proteins S3 and S10.

Its function is as follows. Binds 16S rRNA, required for the assembly of 30S particles and may also be responsible for determining the conformation of the 16S rRNA at the A site. In Shewanella oneidensis (strain ATCC 700550 / JCM 31522 / CIP 106686 / LMG 19005 / NCIMB 14063 / MR-1), this protein is Small ribosomal subunit protein uS14.